Here is a 61-residue protein sequence, read N- to C-terminus: Large ribosomal subunit protein uL30 (61 aa).

This sequence belongs to the universal ribosomal protein uL30 family. Part of the 50S ribosomal subunit.

This chain is Large ribosomal subunit protein uL30, found in Rubrobacter xylanophilus (strain DSM 9941 / JCM 11954 / NBRC 16129 / PRD-1).